Reading from the N-terminus, the 628-residue chain is Phosphomethylpyrimidine synthase (628 aa).

A disordered region spans residues 1-22; the sequence is MSKQEKTINLSESAQVDQQSVQ. A compositionally biased stretch (polar residues) spans 7 to 22; that stretch reads TINLSESAQVDQQSVQ. Residues N232, M261, Y290, H326, 346–348, 387–390, and E426 contribute to the substrate site; these read SRG and DGLR. Zn(2+) is bound at residue H430. Substrate is bound at residue Y453. Residue H494 participates in Zn(2+) binding. 3 residues coordinate [4Fe-4S] cluster: C574, C577, and C582.

The protein belongs to the ThiC family. Homodimer. [4Fe-4S] cluster is required as a cofactor.

It carries out the reaction 5-amino-1-(5-phospho-beta-D-ribosyl)imidazole + S-adenosyl-L-methionine = 4-amino-2-methyl-5-(phosphooxymethyl)pyrimidine + CO + 5'-deoxyadenosine + formate + L-methionine + 3 H(+). It participates in cofactor biosynthesis; thiamine diphosphate biosynthesis. Its function is as follows. Catalyzes the synthesis of the hydroxymethylpyrimidine phosphate (HMP-P) moiety of thiamine from aminoimidazole ribotide (AIR) in a radical S-adenosyl-L-methionine (SAM)-dependent reaction. In Pseudomonas putida (strain W619), this protein is Phosphomethylpyrimidine synthase.